A 346-amino-acid polypeptide reads, in one-letter code: D-alanine--D-alanine ligase (346 aa).

In terms of domain architecture, ATP-grasp spans 133–324; the sequence is KLYAQSVGVK…IVDNLAKNIE (192 aa). ATP is bound at residue 159–211; the sequence is LSFPCILKPARLGSSIGISIVKDESELKYAKDVAFEFDEDVVVEQFVSNIKEY. Mg(2+) contacts are provided by D284, E296, and N298.

This sequence belongs to the D-alanine--D-alanine ligase family. Mg(2+) is required as a cofactor. It depends on Mn(2+) as a cofactor.

Its subcellular location is the cytoplasm. It catalyses the reaction 2 D-alanine + ATP = D-alanyl-D-alanine + ADP + phosphate + H(+). The protein operates within cell wall biogenesis; peptidoglycan biosynthesis. Its function is as follows. Cell wall formation. The sequence is that of D-alanine--D-alanine ligase from Campylobacter lari (strain RM2100 / D67 / ATCC BAA-1060).